The primary structure comprises 337 residues: Adenosine deaminase (337 aa).

Residues His12 and His14 each contribute to the Zn(2+) site. Substrate is bound by residues His14, Asp16, and Gly170. His197 contacts Zn(2+). Residue Glu200 is the Proton donor of the active site. A Zn(2+)-binding site is contributed by Asp278. Asp279 serves as a coordination point for substrate.

It belongs to the metallo-dependent hydrolases superfamily. Adenosine and AMP deaminases family. Adenosine deaminase subfamily. Zn(2+) serves as cofactor.

The catalysed reaction is adenosine + H2O + H(+) = inosine + NH4(+). The enzyme catalyses 2'-deoxyadenosine + H2O + H(+) = 2'-deoxyinosine + NH4(+). In terms of biological role, catalyzes the hydrolytic deamination of adenosine and 2-deoxyadenosine. The protein is Adenosine deaminase of Pectobacterium atrosepticum (strain SCRI 1043 / ATCC BAA-672) (Erwinia carotovora subsp. atroseptica).